A 481-amino-acid polypeptide reads, in one-letter code: Hyaluronidase-4 (481 aa).

Over 1 to 11 (MQLLPEGQLRL) the chain is Cytoplasmic. A helical membrane pass occupies residues 12-32 (CVFQPVHLTSGLLILFILKSI). At 33-455 (SSLKPARLPV…CREMTEASGP (423 aa)) the chain is on the extracellular side. 5 disulfide bridges follow: C59-C351, C223-C237, C376-C387, C381-C435, and C437-C446. N64 and N115 each carry an N-linked (GlcNAc...) asparagine glycan. Catalysis depends on E147, which acts as the Proton donor. 2 N-linked (GlcNAc...) asparagine glycosylation sites follow: N232 and N343. Residues 456-476 (SGLSLSSSSVITLCLLVLAGY) traverse the membrane as a helical segment. The Cytoplasmic portion of the chain corresponds to 477–481 (QSIQL).

Belongs to the glycosyl hydrolase 56 family.

The protein localises to the membrane. It catalyses the reaction Random hydrolysis of (1-&gt;4)-linkages between N-acetyl-beta-D-glucosamine and D-glucuronate residues in hyaluronate.. Endo-hyaluronidase that degrades hyaluronan to smaller oligosaccharide fragments. Also has chondroitin sulfate hydrolase activity, The best substrate being the galactosaminidic linkage in the sequence of a trisulfated tetrasaccharide. In Mus musculus (Mouse), this protein is Hyaluronidase-4 (Hyal4).